The primary structure comprises 285 residues: Probable endonuclease 4 (285 aa).

Residues H69, H109, E145, D179, H182, H216, D229, H231, and E261 each coordinate Zn(2+).

This sequence belongs to the AP endonuclease 2 family. The cofactor is Zn(2+).

It carries out the reaction Endonucleolytic cleavage to 5'-phosphooligonucleotide end-products.. Its function is as follows. Endonuclease IV plays a role in DNA repair. It cleaves phosphodiester bonds at apurinic or apyrimidinic (AP) sites, generating a 3'-hydroxyl group and a 5'-terminal sugar phosphate. This is Probable endonuclease 4 from Cronobacter sakazakii (strain ATCC BAA-894) (Enterobacter sakazakii).